The primary structure comprises 204 residues: Anthranilate synthase component 2 (204 aa).

Residues arginine 3–alanine 204 form the Glutamine amidotransferase type-1 domain. Glycine 58 to glycine 60 provides a ligand contact to L-glutamine. The active-site Nucleophile; for GATase activity is cysteine 88. Serine 138–leucine 139 contacts L-glutamine. Residues histidine 178 and glutamate 180 each act as for GATase activity in the active site.

In terms of assembly, heterotetramer consisting of two non-identical subunits: a beta subunit (TrpG) and a large alpha subunit (TrpE).

The catalysed reaction is chorismate + L-glutamine = anthranilate + pyruvate + L-glutamate + H(+). It functions in the pathway amino-acid biosynthesis; L-tryptophan biosynthesis; L-tryptophan from chorismate: step 1/5. In terms of biological role, part of a heterotetrameric complex that catalyzes the two-step biosynthesis of anthranilate, an intermediate in the biosynthesis of L-tryptophan. In the first step, the glutamine-binding beta subunit (TrpG) of anthranilate synthase (AS) provides the glutamine amidotransferase activity which generates ammonia as a substrate that, along with chorismate, is used in the second step, catalyzed by the large alpha subunit of AS (TrpE) to produce anthranilate. In the absence of TrpG, TrpE can synthesize anthranilate directly from chorismate and high concentrations of ammonia. This Haloferax volcanii (strain ATCC 29605 / DSM 3757 / JCM 8879 / NBRC 14742 / NCIMB 2012 / VKM B-1768 / DS2) (Halobacterium volcanii) protein is Anthranilate synthase component 2 (trpG).